The primary structure comprises 360 residues: Phospho-N-acetylmuramoyl-pentapeptide-transferase (360 aa).

10 helical membrane passes run 25 to 45 (RGIL…PWMI), 73 to 93 (TMGG…WADL), 97 to 117 (YVWV…VDDY), 142 to 162 (IGAA…TLIV), 167 to 187 (SVEI…IVGS), 199 to 219 (GLAI…CYLS), 236 to 256 (AGEL…FLWF), 263 to 283 (VFMG…IAVI), 288 to 308 (IVLF…MIQV), and 338 to 358 (VIVR…ATLK).

Belongs to the glycosyltransferase 4 family. MraY subfamily. Mg(2+) serves as cofactor.

It is found in the cell inner membrane. The catalysed reaction is UDP-N-acetyl-alpha-D-muramoyl-L-alanyl-gamma-D-glutamyl-meso-2,6-diaminopimeloyl-D-alanyl-D-alanine + di-trans,octa-cis-undecaprenyl phosphate = di-trans,octa-cis-undecaprenyl diphospho-N-acetyl-alpha-D-muramoyl-L-alanyl-D-glutamyl-meso-2,6-diaminopimeloyl-D-alanyl-D-alanine + UMP. It functions in the pathway cell wall biogenesis; peptidoglycan biosynthesis. In terms of biological role, catalyzes the initial step of the lipid cycle reactions in the biosynthesis of the cell wall peptidoglycan: transfers peptidoglycan precursor phospho-MurNAc-pentapeptide from UDP-MurNAc-pentapeptide onto the lipid carrier undecaprenyl phosphate, yielding undecaprenyl-pyrophosphoryl-MurNAc-pentapeptide, known as lipid I. The polypeptide is Phospho-N-acetylmuramoyl-pentapeptide-transferase (Pseudomonas aeruginosa (strain LESB58)).